We begin with the raw amino-acid sequence, 347 residues long: Ornithine carbamoyltransferase (347 aa).

Carbamoyl phosphate-binding positions include 56–59 (STRT), Gln-83, Arg-107, and 134–137 (HPTQ). Residues Asn-168, Asp-232, and 236–237 (SM) contribute to the L-ornithine site. Residues 274–275 (CL) and Arg-320 contribute to the carbamoyl phosphate site.

Belongs to the aspartate/ornithine carbamoyltransferase superfamily. OTCase family.

It is found in the cytoplasm. The catalysed reaction is carbamoyl phosphate + L-ornithine = L-citrulline + phosphate + H(+). Functionally, reversibly catalyzes the transfer of the carbamoyl group from carbamoyl phosphate (CP) to the N(epsilon) atom of ornithine (ORN) to produce L-citrulline. In Blochmanniella floridana, this protein is Ornithine carbamoyltransferase.